Consider the following 421-residue polypeptide: Subtilisin-like protease 2 (421 aa).

The signal sequence occupies residues M1–G16. Residues D17–A122 constitute a propeptide that is removed on maturation. Residues Q36–A122 enclose the Inhibitor I9 domain. The Peptidase S8 domain occupies R131–Y421. Residues D169 and H201 each act as charge relay system in the active site. Residues N248, N261, and N348 are each glycosylated (N-linked (GlcNAc...) asparagine). The Charge relay system role is filled by S357. A glycan (N-linked (GlcNAc...) asparagine) is linked at N388.

This sequence belongs to the peptidase S8 family.

Its subcellular location is the secreted. Its function is as follows. Secreted subtilisin-like serine protease with keratinolytic activity that contributes to pathogenicity. The polypeptide is Subtilisin-like protease 2 (SUB2) (Arthroderma benhamiae (strain ATCC MYA-4681 / CBS 112371) (Trichophyton mentagrophytes)).